The primary structure comprises 296 residues: MSSGQGYVASGRPLLFDVVSVQSQVVYGHVGNNVAAPALRAHGLHPGIVPTVLLSNTPHYPTLHGGALPLSWFEGYLQDLQARGALQALRAILVGYLGSAEQARVLGRWIARIREVHPQVLVIVDPVMGDDDHGLYVTEGLAEASRECLVPQAHGLTPNSFELGLLTGCEVGRVDQAVAAARRLLAQGLRWVVVTSAAQQDCPPGQVQLLAVTASQAHLLRHQRVDTAPKGTGDLFCAELTAHLLAGASLERAVEASSRYLVQALACTRLADSAELLMPSRDPAQAQAVQWIPLEN.

Residues S23 and H59 each contribute to the substrate site. D125 provides a ligand contact to ATP. Y136 contributes to the Mg(2+) binding site. ATP contacts are provided by residues T157, E162, T195, 222–225 (HQRV), and T232. Residue E162 coordinates Mg(2+). D234 is a substrate binding site.

This sequence belongs to the pyridoxine kinase family. PdxK subfamily. Homodimer. It depends on Mg(2+) as a cofactor.

It carries out the reaction pyridoxal + ATP = pyridoxal 5'-phosphate + ADP + H(+). It catalyses the reaction pyridoxine + ATP = pyridoxine 5'-phosphate + ADP + H(+). The enzyme catalyses pyridoxamine + ATP = pyridoxamine 5'-phosphate + ADP + H(+). The protein operates within cofactor metabolism; pyridoxal 5'-phosphate salvage; pyridoxal 5'-phosphate from pyridoxal: step 1/1. Its pathway is cofactor metabolism; pyridoxal 5'-phosphate salvage; pyridoxine 5'-phosphate from pyridoxine: step 1/1. It functions in the pathway cofactor metabolism; pyridoxal 5'-phosphate salvage; pyridoxamine 5'-phosphate from pyridoxamine: step 1/1. Functionally, B6-vitamer kinase involved in the salvage pathway of pyridoxal 5'-phosphate (PLP). Catalyzes the phosphorylation of pyridoxine (PN), pyridoxal (PL), and pyridoxamine (PM), forming their respective 5'-phosphorylated esters, i.e. PNP, PLP and PMP. This Bordetella avium (strain 197N) protein is Pyridoxine/pyridoxal/pyridoxamine kinase.